A 157-amino-acid polypeptide reads, in one-letter code: Thioredoxin-T (157 aa).

The Thioredoxin domain occupies 2–107 (VYPVRNKDDL…LAKLMEKHAG (106 aa)). The cysteines at positions 32 and 35 are disulfide-linked. Residues 132 to 157 (ESSESDNDNNNVNEVSAHDENAVLEH) are disordered. Over residues 147 to 157 (SAHDENAVLEH) the composition is skewed to basic and acidic residues.

It belongs to the thioredoxin family. Testis specific. Not expressed in the embryo. Becomes progressively more strongly expressed during larval and pupal development. In testis, it is strongly expressed in young spermatocytes, and postmeiotic spermatid stages, then expression decreases at the nuclear elongation stage. Strongly expressed in the waste bag, in which material no longer needed for the mature sperm is eliminated. Not expressed in the stem cells and spermatogonial cells.

The protein resides in the nucleus. It is found in the chromosome. Probably participates in various redox reactions through the reversible oxidation of its active center dithiol to a disulfide and catalyzes dithiol-disulfide exchange reactions. Its tissue specificity suggests a regulatory role in the germline. The sequence is that of Thioredoxin-T (TrxT) from Drosophila melanogaster (Fruit fly).